The following is a 320-amino-acid chain: 1-aminocyclopropane-1-carboxylate oxidase 3 (320 aa).

The Fe2OG dioxygenase domain maps to 154 to 254 (PNFGTKVSNY…RMSIASFYNP (101 aa)). Fe cation-binding residues include His-178, Asp-180, and His-235.

It belongs to the iron/ascorbate-dependent oxidoreductase family. Fe cation serves as cofactor. As to expression, flowers.

It catalyses the reaction 1-aminocyclopropane-1-carboxylate + L-ascorbate + O2 = ethene + L-dehydroascorbate + hydrogen cyanide + CO2 + 2 H2O. Its pathway is alkene biosynthesis; ethylene biosynthesis via S-adenosyl-L-methionine; ethylene from S-adenosyl-L-methionine: step 2/2. This is 1-aminocyclopropane-1-carboxylate oxidase 3 (ACO3) from Cucumis melo (Muskmelon).